Consider the following 396-residue polypeptide: Succinyl-diaminopimelate desuccinylase (396 aa).

Position 74 (His74) interacts with Zn(2+). Asp76 is an active-site residue. Asp107 is a binding site for Zn(2+). Glu142 acts as the Proton acceptor in catalysis. Residues Glu143, Glu171, and His360 each coordinate Zn(2+).

Belongs to the peptidase M20A family. DapE subfamily. In terms of assembly, homodimer. Zn(2+) serves as cofactor. Requires Co(2+) as cofactor.

It catalyses the reaction N-succinyl-(2S,6S)-2,6-diaminopimelate + H2O = (2S,6S)-2,6-diaminopimelate + succinate. It functions in the pathway amino-acid biosynthesis; L-lysine biosynthesis via DAP pathway; LL-2,6-diaminopimelate from (S)-tetrahydrodipicolinate (succinylase route): step 3/3. In terms of biological role, catalyzes the hydrolysis of N-succinyl-L,L-diaminopimelic acid (SDAP), forming succinate and LL-2,6-diaminopimelate (DAP), an intermediate involved in the bacterial biosynthesis of lysine and meso-diaminopimelic acid, an essential component of bacterial cell walls. This chain is Succinyl-diaminopimelate desuccinylase, found in Methylobacterium nodulans (strain LMG 21967 / CNCM I-2342 / ORS 2060).